Consider the following 246-residue polypeptide: Pyridoxine 5'-phosphate synthase (246 aa).

N12 is a binding site for 3-amino-2-oxopropyl phosphate. 14 to 15 (DH) serves as a coordination point for 1-deoxy-D-xylulose 5-phosphate. R23 is a 3-amino-2-oxopropyl phosphate binding site. H48 (proton acceptor) is an active-site residue. Residues R50 and H55 each contribute to the 1-deoxy-D-xylulose 5-phosphate site. E75 functions as the Proton acceptor in the catalytic mechanism. T105 serves as a coordination point for 1-deoxy-D-xylulose 5-phosphate. The active-site Proton donor is the H196. 3-amino-2-oxopropyl phosphate-binding positions include G197 and 218 to 219 (GH).

The protein belongs to the PNP synthase family. As to quaternary structure, homooctamer; tetramer of dimers.

Its subcellular location is the cytoplasm. The enzyme catalyses 3-amino-2-oxopropyl phosphate + 1-deoxy-D-xylulose 5-phosphate = pyridoxine 5'-phosphate + phosphate + 2 H2O + H(+). The protein operates within cofactor biosynthesis; pyridoxine 5'-phosphate biosynthesis; pyridoxine 5'-phosphate from D-erythrose 4-phosphate: step 5/5. Functionally, catalyzes the complicated ring closure reaction between the two acyclic compounds 1-deoxy-D-xylulose-5-phosphate (DXP) and 3-amino-2-oxopropyl phosphate (1-amino-acetone-3-phosphate or AAP) to form pyridoxine 5'-phosphate (PNP) and inorganic phosphate. This is Pyridoxine 5'-phosphate synthase from Pseudomonas putida (strain W619).